The primary structure comprises 41 residues: Conotoxin Bu22 (41 aa).

The propeptide occupies 1–25; that stretch reads SDRASDGRNAAANDRASDLVALTVR. Intrachain disulfides connect cysteine 27-cysteine 33 and cysteine 28-cysteine 40.

Belongs to the conotoxin A superfamily. Expressed by the venom duct.

Its subcellular location is the secreted. The sequence is that of Conotoxin Bu22 from Conus bullatus (Bubble cone).